Here is a 138-residue protein sequence, read N- to C-terminus: Large ribosomal subunit protein uL16 (138 aa).

It belongs to the universal ribosomal protein uL16 family. As to quaternary structure, part of the 50S ribosomal subunit.

Binds 23S rRNA and is also seen to make contacts with the A and possibly P site tRNAs. The chain is Large ribosomal subunit protein uL16 from Acidiphilium cryptum (strain JF-5).